The sequence spans 201 residues: Recombination protein RecR (201 aa).

The C4-type zinc-finger motif lies at 58–73; that stretch reads CEQCASITDTCPCRIC. The Toprim domain occupies 81–178; the sequence is DKLCLVSEWD…ELSRLAQGIP (98 aa).

It belongs to the RecR family.

May play a role in DNA repair. It seems to be involved in an RecBC-independent recombinational process of DNA repair. It may act with RecF and RecO. The chain is Recombination protein RecR from Maridesulfovibrio salexigens (strain ATCC 14822 / DSM 2638 / NCIMB 8403 / VKM B-1763) (Desulfovibrio salexigens).